A 72-amino-acid polypeptide reads, in one-letter code: Translation initiation factor IF-1 (72 aa).

The region spanning 1 to 72 (MAKEEVLEFP…TKGRITYRFK (72 aa)) is the S1-like domain.

Belongs to the IF-1 family. In terms of assembly, component of the 30S ribosomal translation pre-initiation complex which assembles on the 30S ribosome in the order IF-2 and IF-3, IF-1 and N-formylmethionyl-tRNA(fMet); mRNA recruitment can occur at any time during PIC assembly.

The protein resides in the cytoplasm. One of the essential components for the initiation of protein synthesis. Stabilizes the binding of IF-2 and IF-3 on the 30S subunit to which N-formylmethionyl-tRNA(fMet) subsequently binds. Helps modulate mRNA selection, yielding the 30S pre-initiation complex (PIC). Upon addition of the 50S ribosomal subunit IF-1, IF-2 and IF-3 are released leaving the mature 70S translation initiation complex. This Brucella abortus (strain 2308) protein is Translation initiation factor IF-1.